The sequence spans 336 residues: Galactinol synthase 6 (336 aa).

Lys-106 is a catalytic residue. Mn(2+) is bound by residues Asp-122, Asp-124, and His-260.

The protein belongs to the glycosyltransferase 8 family. Galactosyltransferase subfamily. The cofactor is a divalent metal cation.

It localises to the cytoplasm. The enzyme catalyses myo-inositol + UDP-alpha-D-galactose = alpha-D-galactosyl-(1-&gt;3)-1D-myo-inositol + UDP + H(+). Functionally, galactinol synthase involved in the biosynthesis of raffinose family oligosaccharides (RFOs) that function as osmoprotectants. May promote plant stress tolerance. In Arabidopsis thaliana (Mouse-ear cress), this protein is Galactinol synthase 6 (GOLS6).